We begin with the raw amino-acid sequence, 122 residues long: Large ribosomal subunit protein uL14 (122 aa).

The protein belongs to the universal ribosomal protein uL14 family. As to quaternary structure, part of the 50S ribosomal subunit. Forms a cluster with proteins L3 and L19. In the 70S ribosome, L14 and L19 interact and together make contacts with the 16S rRNA in bridges B5 and B8.

Binds to 23S rRNA. Forms part of two intersubunit bridges in the 70S ribosome. The chain is Large ribosomal subunit protein uL14 from Rickettsia felis (strain ATCC VR-1525 / URRWXCal2) (Rickettsia azadi).